A 494-amino-acid chain; its full sequence is Aspartyl/glutamyl-tRNA(Asn/Gln) amidotransferase subunit B (494 aa).

Belongs to the GatB/GatE family. GatB subfamily. In terms of assembly, heterotrimer of A, B and C subunits.

The catalysed reaction is L-glutamyl-tRNA(Gln) + L-glutamine + ATP + H2O = L-glutaminyl-tRNA(Gln) + L-glutamate + ADP + phosphate + H(+). It carries out the reaction L-aspartyl-tRNA(Asn) + L-glutamine + ATP + H2O = L-asparaginyl-tRNA(Asn) + L-glutamate + ADP + phosphate + 2 H(+). In terms of biological role, allows the formation of correctly charged Asn-tRNA(Asn) or Gln-tRNA(Gln) through the transamidation of misacylated Asp-tRNA(Asn) or Glu-tRNA(Gln) in organisms which lack either or both of asparaginyl-tRNA or glutaminyl-tRNA synthetases. The reaction takes place in the presence of glutamine and ATP through an activated phospho-Asp-tRNA(Asn) or phospho-Glu-tRNA(Gln). This chain is Aspartyl/glutamyl-tRNA(Asn/Gln) amidotransferase subunit B, found in Synechococcus sp. (strain ATCC 27144 / PCC 6301 / SAUG 1402/1) (Anacystis nidulans).